The chain runs to 88 residues: MKFFLLFLVVLPIMGVLGKKNGYAVDSKGKAPECFLSNYCNNECTKVHYADKGYCCLLSCYCFGLNDDKKVLEISGTTKKYCDFTIIN.

The first 18 residues, 1–18, serve as a signal peptide directing secretion; that stretch reads MKFFLLFLVVLPIMGVLG. An LCN-type CS-alpha/beta domain is found at 20-83; it reads KNGYAVDSKG…ISGTTKKYCD (64 aa). 4 cysteine pairs are disulfide-bonded: Cys34–Cys55, Cys40–Cys60, Cys44–Cys62, and Cys56–Cys82.

It belongs to the long (4 C-C) scorpion toxin superfamily. Sodium channel inhibitor family. Beta subfamily. In terms of tissue distribution, expressed by the venom gland.

The protein localises to the secreted. Its function is as follows. Excitatory insect toxins induce a spastic paralysis. They bind voltage-independently at site-4 of sodium channels (Nav) and shift the voltage of activation toward more negative potentials thereby affecting sodium channel activation and promoting spontaneous and repetitive firing. The protein is Beta-insect excitatory toxin LqhIT1a of Leiurus hebraeus (Hebrew deathstalker scorpion).